Consider the following 495-residue polypeptide: Cobyric acid synthase (495 aa).

The GATase cobBQ-type domain occupies 253–446; that stretch reads KISIAIVYFP…FHGIFDGSAF (194 aa). The active-site Nucleophile is Cys-334. Residue His-438 is part of the active site.

The protein belongs to the CobB/CobQ family. CobQ subfamily.

It functions in the pathway cofactor biosynthesis; adenosylcobalamin biosynthesis. Functionally, catalyzes amidations at positions B, D, E, and G on adenosylcobyrinic A,C-diamide. NH(2) groups are provided by glutamine, and one molecule of ATP is hydrogenolyzed for each amidation. In Chlorobium phaeobacteroides (strain BS1), this protein is Cobyric acid synthase.